Reading from the N-terminus, the 406-residue chain is Tryptophan synthase beta chain (406 aa).

The residue at position 99 (Lys99) is an N6-(pyridoxal phosphate)lysine.

This sequence belongs to the TrpB family. In terms of assembly, tetramer of two alpha and two beta chains. Pyridoxal 5'-phosphate is required as a cofactor.

It catalyses the reaction (1S,2R)-1-C-(indol-3-yl)glycerol 3-phosphate + L-serine = D-glyceraldehyde 3-phosphate + L-tryptophan + H2O. Its pathway is amino-acid biosynthesis; L-tryptophan biosynthesis; L-tryptophan from chorismate: step 5/5. In terms of biological role, the beta subunit is responsible for the synthesis of L-tryptophan from indole and L-serine. The polypeptide is Tryptophan synthase beta chain (Methylobacterium nodulans (strain LMG 21967 / CNCM I-2342 / ORS 2060)).